The chain runs to 245 residues: U11/U12 small nuclear ribonucleoprotein 35 kDa protein (245 aa).

The RRM domain maps to 51–129 (LTLFVARLNL…HEIFVDYELE (79 aa)). A compositionally biased stretch (basic and acidic residues) spans 146–162 (GKKESGQLRFGGRDRPF). A disordered region spans residues 146 to 165 (GKKESGQLRFGGRDRPFRKP). Lys172 is covalently cross-linked (Glycyl lysine isopeptide (Lys-Gly) (interchain with G-Cter in SUMO2)). Residues 173–222 (NDQFREGKRERRERSRSRERHWDSRMRDHHDRGREKRWQEREPARAWPEG) are disordered. Basic and acidic residues-rich tracts occupy residues 174 to 185 (DQFREGKRERRE) and 192 to 216 (RHWD…REPA).

Component of the U11/U12 snRNPs that are part of the U12-type spliceosome.

Its subcellular location is the nucleus. The protein is U11/U12 small nuclear ribonucleoprotein 35 kDa protein (SNRNP35) of Bos taurus (Bovine).